The following is a 155-amino-acid chain: 6,7-dimethyl-8-ribityllumazine synthase (155 aa).

Residues Trp-24, 58 to 60, and 82 to 84 each bind 5-amino-6-(D-ribitylamino)uracil; these read AFE and AVI. 87–88 is a (2S)-2-hydroxy-3-oxobutyl phosphate binding site; the sequence is GT. The active-site Proton donor is His-90. Phe-115 is a binding site for 5-amino-6-(D-ribitylamino)uracil. Residue Arg-129 participates in (2S)-2-hydroxy-3-oxobutyl phosphate binding.

The protein belongs to the DMRL synthase family. As to quaternary structure, forms an icosahedral capsid composed of 60 subunits, arranged as a dodecamer of pentamers.

It catalyses the reaction (2S)-2-hydroxy-3-oxobutyl phosphate + 5-amino-6-(D-ribitylamino)uracil = 6,7-dimethyl-8-(1-D-ribityl)lumazine + phosphate + 2 H2O + H(+). It functions in the pathway cofactor biosynthesis; riboflavin biosynthesis; riboflavin from 2-hydroxy-3-oxobutyl phosphate and 5-amino-6-(D-ribitylamino)uracil: step 1/2. Functionally, catalyzes the formation of 6,7-dimethyl-8-ribityllumazine by condensation of 5-amino-6-(D-ribitylamino)uracil with 3,4-dihydroxy-2-butanone 4-phosphate. This is the penultimate step in the biosynthesis of riboflavin. This chain is 6,7-dimethyl-8-ribityllumazine synthase, found in Saccharophagus degradans (strain 2-40 / ATCC 43961 / DSM 17024).